Here is a 47-residue protein sequence, read N- to C-terminus: Ribosome-inactivating protein luffin P1 (47 aa).

Intrachain disulfides connect C12-C33 and C16-C29.

As to quaternary structure, homotetramer.

The enzyme catalyses Endohydrolysis of the N-glycosidic bond at one specific adenosine on the 28S rRNA.. Its function is as follows. Inhibits protein synthesis in animal cells. The chain is Ribosome-inactivating protein luffin P1 from Luffa aegyptiaca (Sponge gourd).